Reading from the N-terminus, the 180-residue chain is Large ribosomal subunit protein uL5 (180 aa).

The protein belongs to the universal ribosomal protein uL5 family. In terms of assembly, part of the 50S ribosomal subunit; part of the 5S rRNA/L5/L18/L25 subcomplex. Contacts the 5S rRNA and the P site tRNA. Forms a bridge to the 30S subunit in the 70S ribosome.

This is one of the proteins that bind and probably mediate the attachment of the 5S RNA into the large ribosomal subunit, where it forms part of the central protuberance. In the 70S ribosome it contacts protein S13 of the 30S subunit (bridge B1b), connecting the 2 subunits; this bridge is implicated in subunit movement. Contacts the P site tRNA; the 5S rRNA and some of its associated proteins might help stabilize positioning of ribosome-bound tRNAs. The protein is Large ribosomal subunit protein uL5 of Clostridium botulinum (strain Loch Maree / Type A3).